The following is an 872-amino-acid chain: Alanine--tRNA ligase (872 aa).

Zn(2+) is bound by residues His-567, His-571, Cys-669, and His-673.

It belongs to the class-II aminoacyl-tRNA synthetase family. Zn(2+) is required as a cofactor.

The protein localises to the cytoplasm. It carries out the reaction tRNA(Ala) + L-alanine + ATP = L-alanyl-tRNA(Ala) + AMP + diphosphate. Catalyzes the attachment of alanine to tRNA(Ala) in a two-step reaction: alanine is first activated by ATP to form Ala-AMP and then transferred to the acceptor end of tRNA(Ala). Also edits incorrectly charged Ser-tRNA(Ala) and Gly-tRNA(Ala) via its editing domain. The polypeptide is Alanine--tRNA ligase (Streptococcus pneumoniae serotype 4 (strain ATCC BAA-334 / TIGR4)).